The primary structure comprises 429 residues: MPYITDVYAREVLDSRGNPTIEVEIFTESGAFGSAIVPSGASTGEYEAVELRDGDKDRYLGKGVQKAVENVNDLIAPELIGIDVTRQNIIDALMIDLDGTENKGKLGANAILGVSMAAAHAAANYLEVPLYNYLGGFNAKTLPTPMMNILNGGEHADNNVDIQEFMIMPVGAPTFKEALRTGAEIFHALKKVLTSKGYNTAVGDEGGFAPNLGSNEEALQTIVEAIEAAGYKPGEEVKLAMDVAASEIYSDGKYNLKGEGVVRSSEEMVDWYEEMISKYPIISIEDGLDENDWDGFKILTDRLGDKVQLVGDDLFVTNTNKLSKGIDQGIGNSILIKVNQIGTLTETFEAIEMAKRAGYTAVISHRSGETEDVTIADIAVATNAGQIKTGAPSRTDRVAKYNQLLRIEDELAGMGEYGGLASFYNLANK.

Gln-163 is a binding site for (2R)-2-phosphoglycerate. The Proton donor role is filled by Glu-205. Residues Asp-242, Glu-285, and Asp-312 each contribute to the Mg(2+) site. (2R)-2-phosphoglycerate is bound by residues Lys-337, Arg-366, Ser-367, and Lys-388. The active-site Proton acceptor is Lys-337.

It belongs to the enolase family. Requires Mg(2+) as cofactor.

The protein localises to the cytoplasm. It localises to the secreted. It is found in the cell surface. The catalysed reaction is (2R)-2-phosphoglycerate = phosphoenolpyruvate + H2O. It participates in carbohydrate degradation; glycolysis; pyruvate from D-glyceraldehyde 3-phosphate: step 4/5. In terms of biological role, catalyzes the reversible conversion of 2-phosphoglycerate (2-PG) into phosphoenolpyruvate (PEP). It is essential for the degradation of carbohydrates via glycolysis. This is Enolase from Oceanobacillus iheyensis (strain DSM 14371 / CIP 107618 / JCM 11309 / KCTC 3954 / HTE831).